The primary structure comprises 1961 residues: Ankyrin-3 (1961 aa).

Basic and acidic residues predominate over residues 1–10; that stretch reads MSEEPKEKPA. The tract at residues 1-25 is disordered; it reads MSEEPKEKPAKPAHRKRKGKKSDAN. Residues 11–20 show a composition bias toward basic residues; that stretch reads KPAHRKRKGK. The residue at position 22 (Ser22) is a Phosphoserine. 23 ANK repeats span residues 56-85, 89-118, 122-151, 155-184, 186-213, 217-246, 250-279, 283-312, 316-345, 349-378, 382-411, 415-444, 448-477, 481-510, 514-543, 547-576, 580-609, 613-642, 646-675, 679-708, 712-741, 745-774, and 778-807; these read NGLNALHLASKEGHVEVVSELLQREANVDA, KGNTALHIASLAGQAEVVKVLVTNGANVNA, NGFTPLYMAAQENHLEVVRFLLDNGASQSL, DGFTPLAVALQQGHDQVVSLLLENDTKGKV, LPALHIAARKDDTKAAALLLQNDTNADV, SGFTPLHIAAHYGNINVATLLLNRAAAVDF, NDITPLHVASKRGNANMVKLLLDRGAKIDA, DGLTPLHCGARSGHEQVVEMLLDRSAPILS, NGLSPLHMATQGDHLNCVQLLLQHNVPVDD, DYLTALHVAAHCGHYKVAKVLLDKKASPNA, NGFTPLHIACKKNRIRVMELLLKHGASIQA, SGLTPIHVAAFMGHVNIVSQLMHHGASPNT, RGETALHMAARSGQAEVVRYLVQDGAQVEA, DDQTPLHISARLGKADIVQQLLQQGASPNA, SGYTPLHLAAREGHEDVAAFLLDHGASLSI, KGFTPLHVAAKYGKLEVASLLLQKSASPDA, SGLTPLHVAAHYDNQKVALLLLDQGASPHA, NGYTPLHIAAKKNQMDIATSLLEYGADANA, QGIASVHLAAQEGHVDMVSLLLSRNANVNL, SGLTPLHLAAQEDRVNVAEVLVNQGAHVDA, MGYTPLHVGCHYGNIKIVNFLLQHSAKVNA, NGYTALHQAAQQGHTHIINVLLQNNASPNE, and NGNTALAIARRLGYISVVDTLKVVTEEIMT. Position 606 is a phosphoserine (Ser606). Phosphoserine is present on Leu732. Phosphoserine is present on residues Ser830, Ser844, Ser850, Ser873, Ser914, Ser917, Ser923, Ser958, Ser960, and Ser1114. 2 consecutive ZU5 domains span residues 985–1140 and 1142–1289; these read FLVS…VVSR and KQES…LADC. The UPA domain stretch occupies residues 1274 to 1408; it reads VSFTTNVSAR…SIKIRDTSQE (135 aa). 5 positions are modified to phosphoserine: Ser1451, Ser1462, Ser1470, Ser1473, and Gly1560. The Death domain maps to 1478-1562; it reads TDIRMAIVAD…DIVTLLEGPI (85 aa). Disordered regions lie at residues 1606-1678, 1698-1740, 1784-1818, 1844-1884, and 1915-1961; these read PNPF…DPLD, SVPG…VTED, WQNETPSGSLESPAQARRLTGGLLDRLDDSSDQAR, PEAK…PVSP, and MTRT…KKTH. Residues 1725 to 1740 are compositionally biased toward basic and acidic residues; the sequence is QQEKGKSGPDEEVTED. Residues 1784–1795 show a composition bias toward polar residues; sequence WQNETPSGSLES. Phosphoserine occurs at positions 1795, 1813, and 1883. Over residues 1808–1818 the composition is skewed to basic and acidic residues; that stretch reads DRLDDSSDQAR. Positions 1933-1961 are enriched in basic and acidic residues; that stretch reads GSTRSEPKQGEGYKVKTKKEIRNVEKKTH.

As to quaternary structure, may be a constituent of a NFASC/NRCAM/ankyrin G complex. Interacts with RHBG. Directly interacts with DMD and betaDAG1; this interaction does not interfere with DMD-binding and is required for DMD and betaDAG1 retention at costameres. Interacts (via N-terminal ANK repeats) with SCHIP1 isoform 7 (via C-terminus); this interaction is required for the localization at axon initial segments (AISs) and nodes of Ranvier (NRs). Interacts with PLEC and FLNC. Interacts with KCNA1; this inhibits channel activity. Interacts with SCN5A. Interacts with PKP2 and GJA1/CX43. Expressed in many epithelial tissues, muscles and axons. Expressed in kidney, brain, skin, lung, liver, intestine, pancreas, heart and testis (at protein level). In testis, expressed in Leydig cells, but very weakly or not at all in Sertoli cells or seminiferous tubules. Expressed in macrophages (at protein level).

It is found in the cytoplasm. Its subcellular location is the cytoskeleton. The protein localises to the cell projection. The protein resides in the axon. It localises to the cell membrane. It is found in the sarcolemma. Its subcellular location is the postsynaptic cell membrane. The protein localises to the lysosome. The protein resides in the T-tubule. Its function is as follows. Membrane-cytoskeleton linker. May participate in the maintenance/targeting of ion channels and cell adhesion molecules at the nodes of Ranvier and axonal initial segments. In skeletal muscle, required for costamere localization of DMD and betaDAG1. Regulates KCNA1 channel activity in function of dietary Mg(2+) levels, and thereby contributes to the regulation of renal Mg(2+) reabsorption. Required for intracellular adhesion and junctional conductance in myocytes, potentially via stabilization of GJA1/CX43 protein abundance and promotion of PKP2, GJA1/CX43, and SCN5A/Nav1.5 localization to cell-cell junctions. This chain is Ankyrin-3 (Ank3), found in Mus musculus (Mouse).